Here is a 248-residue protein sequence, read N- to C-terminus: Large ribosomal subunit protein uL4 (248 aa).

A disordered region spans residues 69–92; it reads HVPRLKNGSRAAKVPQAKGGREAH.

The protein belongs to the universal ribosomal protein uL4 family. As to quaternary structure, part of the 50S ribosomal subunit.

In terms of biological role, one of the primary rRNA binding proteins, this protein initially binds near the 5'-end of the 23S rRNA. It is important during the early stages of 50S assembly. It makes multiple contacts with different domains of the 23S rRNA in the assembled 50S subunit and ribosome. Functionally, forms part of the polypeptide exit tunnel. In Methanoregula boonei (strain DSM 21154 / JCM 14090 / 6A8), this protein is Large ribosomal subunit protein uL4.